A 255-amino-acid chain; its full sequence is UPF0246 protein Caul_4480 (255 aa).

The protein belongs to the UPF0246 family.

This Caulobacter sp. (strain K31) protein is UPF0246 protein Caul_4480.